A 570-amino-acid chain; its full sequence is MKESPLITLVKRHSETHFANIKYGYYVLIISLVYLIGLALLRAFGRRTPSRSSSAFKNKIIYRLYDIDPAIHLGILFFAVLIPFYYHYSLTTQSTVYLKRLGRLSYALIPLNLFLTLRPNWFLRKNCTYTDFIPFHKWFSRIITVIGLLHGIFFIIKWAIDDNVSLKQKLILKTFNFVGFIISILVLFLLICSIGPMRRYNYRLFYIVHNLVNVAFILLTPIHSRPGVKFPFLLLNCTLLFIHIINRIVFAKSLMILNKNANYSKTNLVHVRLPRAILPDYFEPGSHIRISPYRRINPLYWLLPSHPYTIASLAEDNSIDLIIKETSTAEPGSQIESLRSNPKSFHLDQEKTYTLINSYPPSVPEECYSQGTNIAIICGGSGISFALPLFRHFFNKENVKYLKMIWLIKNYSEYELVLDYLKTNGLTFEKKLSNNKRISVFISGEYTAETRLDEITTNIDDENSEYEMGSFNNEDEDLSISNFNSENADSNDNTPETSHSPTKENGSLIEVKSKHSFTLSSELKSFNNESAQVNQNETWLFSCGPPSLLQLSKKYCNDERINFVCETYGL.

A run of 7 helical transmembrane segments spans residues 21–41 (IKYG…LALL), 70–90 (AIHL…HYSL), 101–118 (LGRL…LTLR), 142–162 (IITV…AIDD), 177–197 (FVGF…IGPM), 204–224 (LFYI…PIHS), and 230–250 (FPFL…RIVF). The Ferric oxidoreductase domain occupies 101-219 (LGRLSYALIP…NLVNVAFILL (119 aa)). The 139-residue stretch at 250–388 (FAKSLMILNK…GGSGISFALP (139 aa)) folds into the FAD-binding FR-type domain. Positions 481 to 505 (SNFNSENADSNDNTPETSHSPTKEN) are enriched in polar residues. Residues 481-507 (SNFNSENADSNDNTPETSHSPTKENGS) are disordered.

This sequence belongs to the ferric reductase (FRE) family. AIM14 subfamily. As to quaternary structure, interacts with ribosomes.

It is found in the membrane. Probable cell surface metalloreductase. May be involved in iron or copper homeostasis. In Saccharomyces cerevisiae (strain RM11-1a) (Baker's yeast), this protein is Probable metalloreductase AIM14 (AIM14).